The primary structure comprises 302 residues: 4-hydroxy-tetrahydrodipicolinate synthase (302 aa).

Position 55 (Thr-55) interacts with pyruvate. Catalysis depends on Tyr-144, which acts as the Proton donor/acceptor. Catalysis depends on Lys-172, which acts as the Schiff-base intermediate with substrate. Val-214 serves as a coordination point for pyruvate.

The protein belongs to the DapA family. Homotetramer; dimer of dimers.

It localises to the cytoplasm. The catalysed reaction is L-aspartate 4-semialdehyde + pyruvate = (2S,4S)-4-hydroxy-2,3,4,5-tetrahydrodipicolinate + H2O + H(+). It functions in the pathway amino-acid biosynthesis; L-lysine biosynthesis via DAP pathway; (S)-tetrahydrodipicolinate from L-aspartate: step 3/4. Its function is as follows. Catalyzes the condensation of (S)-aspartate-beta-semialdehyde [(S)-ASA] and pyruvate to 4-hydroxy-tetrahydrodipicolinate (HTPA). The sequence is that of 4-hydroxy-tetrahydrodipicolinate synthase from Parasynechococcus marenigrum (strain WH8102).